A 172-amino-acid polypeptide reads, in one-letter code: Adenine phosphoribosyltransferase (172 aa).

The protein belongs to the purine/pyrimidine phosphoribosyltransferase family. Homodimer.

It is found in the cytoplasm. It catalyses the reaction AMP + diphosphate = 5-phospho-alpha-D-ribose 1-diphosphate + adenine. The protein operates within purine metabolism; AMP biosynthesis via salvage pathway; AMP from adenine: step 1/1. Its function is as follows. Catalyzes a salvage reaction resulting in the formation of AMP, that is energically less costly than de novo synthesis. This is Adenine phosphoribosyltransferase from Roseiflexus sp. (strain RS-1).